A 223-amino-acid chain; its full sequence is Protein phosphatase 1 regulatory subunit 3C (223 aa).

Residues Arg104–His209 form the CBM21 domain.

In terms of assembly, interacts with PPP1CC catalytic subunit of PP1 and associates with glycogen. Forms complexes with glycogen phosphorylase, glycogen synthase and phosphorylase kinase which is necessary for its regulation of PP1 activity.

In terms of biological role, acts as a glycogen-targeting subunit for PP1 and regulates its activity. Activates glycogen synthase, reduces glycogen phosphorylase activity and limits glycogen breakdown. This is Protein phosphatase 1 regulatory subunit 3C from Xenopus tropicalis (Western clawed frog).